The primary structure comprises 178 residues: MFKQLYKDNIVKSLKDKFNYSNVMQVPKLVKVCINMGVGDAATDNKAINEPFDNLHSIAGQKPVLTFAKKSISGFKIRKGATVGCKVTLRRNKMYEFLERLIYIALPREKDFRGFSVKQFDGHGNFSFGIKEHISFLEIDYDKISKIRGMDINIITSAVSDKEAKELLLALKFPFFDN.

This sequence belongs to the universal ribosomal protein uL5 family. As to quaternary structure, part of the 50S ribosomal subunit; part of the 5S rRNA/L5/L18/L25 subcomplex. Contacts the 5S rRNA and the P site tRNA. Forms a bridge to the 30S subunit in the 70S ribosome.

Its function is as follows. This is one of the proteins that bind and probably mediate the attachment of the 5S RNA into the large ribosomal subunit, where it forms part of the central protuberance. In the 70S ribosome it contacts protein S13 of the 30S subunit (bridge B1b), connecting the 2 subunits; this bridge is implicated in subunit movement. Contacts the P site tRNA; the 5S rRNA and some of its associated proteins might help stabilize positioning of ribosome-bound tRNAs. The chain is Large ribosomal subunit protein uL5 from Wolbachia pipientis subsp. Culex pipiens (strain wPip).